Reading from the N-terminus, the 256-residue chain is Hydroxypyruvate/pyruvate aldolase (256 aa).

Residue His-48 is the Proton acceptor of the active site. Residues Glu-152 and Asp-178 each contribute to the a divalent metal cation site.

This sequence belongs to the HpcH/HpaI aldolase family. Requires a divalent metal cation as cofactor.

It catalyses the reaction D-glyceraldehyde + pyruvate = 2-dehydro-3-deoxy-L-galactonate. Its function is as follows. Aldolase which can catalyze in vitro the aldolisation reaction between hydroxypyruvate (HPA) or pyruvate (PA) and D-glyceraldehyde (D-GA). The condensation of pyruvate and D-glyceraldehyde produces 2-dehydro-3-deoxy-L-galactonate as the major product. Has weak activity with hydroxypyruvate and D-glyceraldehyde. In Roseobacter denitrificans (strain ATCC 33942 / OCh 114) (Erythrobacter sp. (strain OCh 114)), this protein is Hydroxypyruvate/pyruvate aldolase.